A 378-amino-acid polypeptide reads, in one-letter code: MGIPKSSIYFCILLFCIISFYLQSSKDGPKELKVKYVFLKKATAKQRGESSLTDSDYFPKQPNMNATLFMLCRNRDIKDALVSIQSVEDRFNHRYHYPWTFMNDAPFTKEFITATSKMVSGDATYVQLNNEEWGIPINIDLNRMLKSIRDMTDDKVIYGFSLSYRIMCRFNSGFFYRNKALSHYDYYWRVEPGVEYSCDIPYDPFRKLSDENKAYGFVISMTDYYETLPSLWNVTRDFIHQNPQYLAQNNSLDFIVNDHQGLSGDYNLCHFWSNFEIANLNFFRSPAYTDYFAHLDKNYGFFYERWGDAPVHSLAASLFLNKSQIHYFEDFGYYHLPWYHCPTDVQSHATARCLCDPTGTIDYLPFSCAIKWLENINS.

Residues 1–6 (MGIPKS) are Cytoplasmic-facing. Residues 7–24 (SIYFCILLFCIISFYLQS) traverse the membrane as a helical; Signal-anchor for type II membrane protein segment. Residues 25-378 (SKDGPKELKV…AIKWLENINS (354 aa)) are Lumenal-facing. Catalysis depends on E276, which acts as the Nucleophile.

The protein belongs to the glycosyltransferase 15 family.

It localises to the endoplasmic reticulum membrane. Its subcellular location is the golgi apparatus membrane. In terms of biological role, probable mannosyltransferase involved in O-glycosylation of cell wall and secreted proteins. The sequence is that of O-glycoside alpha-1,2-mannosyltransferase homolog 3 (omh3) from Schizosaccharomyces pombe (strain 972 / ATCC 24843) (Fission yeast).